Here is a 938-residue protein sequence, read N- to C-terminus: Leucine--tRNA ligase 1 (938 aa).

A 'HIGH' region motif is present at residues 40–50; that stretch reads PYTNSPLHIGH. The short motif at 620–624 is the 'KMSKS' region element; the sequence is KMSKS. Lys-623 provides a ligand contact to ATP.

The protein belongs to the class-I aminoacyl-tRNA synthetase family.

The protein localises to the cytoplasm. It catalyses the reaction tRNA(Leu) + L-leucine + ATP = L-leucyl-tRNA(Leu) + AMP + diphosphate. This is Leucine--tRNA ligase 1 from Metallosphaera sedula (strain ATCC 51363 / DSM 5348 / JCM 9185 / NBRC 15509 / TH2).